Reading from the N-terminus, the 241-residue chain is 2-C-methyl-D-erythritol 4-phosphate cytidylyltransferase (241 aa).

Belongs to the IspD/TarI cytidylyltransferase family. IspD subfamily.

The catalysed reaction is 2-C-methyl-D-erythritol 4-phosphate + CTP + H(+) = 4-CDP-2-C-methyl-D-erythritol + diphosphate. It functions in the pathway isoprenoid biosynthesis; isopentenyl diphosphate biosynthesis via DXP pathway; isopentenyl diphosphate from 1-deoxy-D-xylulose 5-phosphate: step 2/6. Functionally, catalyzes the formation of 4-diphosphocytidyl-2-C-methyl-D-erythritol from CTP and 2-C-methyl-D-erythritol 4-phosphate (MEP). The sequence is that of 2-C-methyl-D-erythritol 4-phosphate cytidylyltransferase from Shewanella denitrificans (strain OS217 / ATCC BAA-1090 / DSM 15013).